The following is a 103-amino-acid chain: MYAVIKTGGKQYRVAAGEKIKVEQIAADVGQEIVFNEVLAVGNGAELKVGTPLVSGATVSVTVLAHGKHDKVSIFKMRRRKHYQKRQGHRQQFTELLVNTIAG.

It belongs to the bacterial ribosomal protein bL21 family. As to quaternary structure, part of the 50S ribosomal subunit. Contacts protein L20.

Its function is as follows. This protein binds to 23S rRNA in the presence of protein L20. This Albidiferax ferrireducens (strain ATCC BAA-621 / DSM 15236 / T118) (Rhodoferax ferrireducens) protein is Large ribosomal subunit protein bL21.